The primary structure comprises 310 residues: Regulator of microtubule dynamics protein 1 (310 aa).

The residue at position 165 (K165) is an N6-succinyllysine. TPR repeat units follow at residues 168–204 (AICI…NPKD) and 222–258 (PWYQ…DPNF).

This sequence belongs to the RMDN family. Interacts with microtubules.

It is found in the cytoplasm. Its subcellular location is the cytoskeleton. It localises to the spindle. The protein localises to the spindle pole. The protein is Regulator of microtubule dynamics protein 1 (Rmdn1) of Rattus norvegicus (Rat).